Reading from the N-terminus, the 169-residue chain is UPF0303 protein BOV_1367 (169 aa).

It belongs to the UPF0303 family.

In Brucella ovis (strain ATCC 25840 / 63/290 / NCTC 10512), this protein is UPF0303 protein BOV_1367.